The primary structure comprises 433 residues: MTATWEKKEGNEGLLTVTVPAEKVNKALDQAFKKVVKQINVPGFRKGKVPRPIFEQRFGVEALYQDAIDILLPDAYGEAIDETDIKPVAQPEVSVTQIEKGKDFIFEATVTVEPEVKLGDYKGLEIEKQETELSDDELQEAIDHSLGHLAEMVVKEDGVVENGDTVNIDFSGSVDGEEFEGGQAEGYDLEIGSGSFIPGFEEQLEGMKVDEEKDVVVTFPEEYHAEELAGKEATFKTKVNEIKFKEVPELTDEIANELDAEANTVDEYKENLRKRLAEQKATDAENVEKEEAITKATDNTTIDIPEAMVNTELDRMVSEFAQRIQQQGLDLQTYFQISGQDETQLREQMKDDAEQRVKTNLTLTAIAEAEKIEATDEDIDKELEKMSKQFNISVEDIKNTLGNTDIIKNDVRIQKVIDLLRDNAKFVEGTKED.

Positions 163–248 (GDTVNIDFSG…VNEIKFKEVP (86 aa)) constitute a PPIase FKBP-type domain.

It belongs to the FKBP-type PPIase family. Tig subfamily.

Its subcellular location is the cytoplasm. It carries out the reaction [protein]-peptidylproline (omega=180) = [protein]-peptidylproline (omega=0). Involved in protein export. Acts as a chaperone by maintaining the newly synthesized protein in an open conformation. Functions as a peptidyl-prolyl cis-trans isomerase. The polypeptide is Trigger factor (Staphylococcus aureus (strain COL)).